The following is a 281-amino-acid chain: Leukocyte antigen CD37 (281 aa).

Residues 1–17 lie on the Cytoplasmic side of the membrane; the sequence is MSAQESCLSLIKYFLFV. Residues 18-38 traverse the membrane as a helical segment; sequence FNLFFFVLGGLIFCFGTWILI. Residues 39–59 are Extracellular-facing; it reads DKTSFVSFVGLSFVPLQTWSK. The helical transmembrane segment at 60–74 threads the bilayer; the sequence is VLAVSGVLTMALALL. Residues 75 to 85 are Cytoplasmic-facing; sequence GCVGALKELRC. The chain crosses the membrane as a helical span at residues 86–111; the sequence is LLGLYFGMLLLLFATQITLGILISTQ. Topologically, residues 112 to 241 are extracellular; it reads RVRLERRVQE…QSLQKWLHNN (130 aa). N170, N183, and N188 each carry an N-linked (GlcNAc...) asparagine glycan. A helical membrane pass occupies residues 242 to 266; sequence IISIVGICLGVGLLELGFMTLSIFL. Residues 267 to 281 lie on the Cytoplasmic side of the membrane; the sequence is CRNLDHVYDRLARYR.

Belongs to the tetraspanin (TM4SF) family. As to quaternary structure, interacts with SCIMP. Interacts with SOCS3. Interacts with DECTIN1/CLEC7A. Tyrosine phosphorylated; leading to activation of downstream signaling pathways.

The protein resides in the cell membrane. Its function is as follows. Structural component of specialized membrane microdomains known as tetraspanin-enriched microdomains (TERMs), which act as platforms for receptor clustering and signaling. Participates thereby in diverse biological functions such as cell signal transduction, adhesion, migration and protein trafficking. Upon ligand binding, two signaling pathways are activated, one acting through phosphorylation by LYN leading to cell death or a survival pathway with activation of GSK3B. Plays an essential role for clustering of integrin ITGA4/ITGB1 and promotes its mobility in the plasma membrane of B-cells. In turn, participates in ITGA4/ITGB1 integrin-mediated antiapoptotic signaling through AKT. Also plays a role in the migration of dendritic cells and neutrophils to draining lymph nodes, as well as in their integrin-mediated adhesion. Negatively regulates IL-6 responses through direct interaction with SOCS3 thereby preventing constitutive IL-6 signaling. Alternatively, inhibition of IL-6 signaling can also occur via interaction and stabilization of DECTIN1/CLEC7A at the cell membrane to inhibit its ability to promote the production of IL-6. The sequence is that of Leukocyte antigen CD37 (Cd37) from Mus musculus (Mouse).